The primary structure comprises 113 residues: MSAIQNLHSFDPFADASKGDDLLPAGTEDYIHIRIQQRNGRKTLTTVQGIADDYDKKKLVKAFKKKFACNGTVIEHPEYGEVIQLQGDQRKNICQFLIEIGLAKDDQLKVHGF.

At Ser2 the chain carries N-acetylserine. A phosphoserine mark is found at Ser2 and Ser9.

Belongs to the SUI1 family. Component of the 43S pre-initiation complex (43S PIC), which is composed of the 40S ribosomal subunit, EIF1, eIF1A (EIF1AX), eIF3 complex, EIF5 and eIF2-GTP-initiator tRNA complex (eIF2 ternary complex). Interacts with EIF4G1; in specific 5'-UTR length and AUG context. Interacts with EIF5; which in a mutual exclusive interaction associates either with EIF1 or with EIF2S2 on a common binding site. Interacts with RENT2.

Its subcellular location is the cytoplasm. In terms of biological role, component of the 43S pre-initiation complex (43S PIC), which binds to the mRNA cap-proximal region, scans mRNA 5'-untranslated region, and locates the initiation codon. Together with eIF1A (EIF1AX), EIF1 facilitates scanning and is essential for start codon recognition on the basis of AUG nucleotide context and location relative to the 5'-cap. Participates to initiation codon selection by influencing the conformation of the 40S ribosomal subunit and the positions of bound mRNA and initiator tRNA; this is possible after its binding to the interface surface of the platform of the 40S ribosomal subunit close to the P-site. Together with eIF1A (EIF1AX), also regulates the opening and closing of the mRNA binding channel, which ensures mRNA recruitment, scanning and the fidelity of initiation codon selection. Continuously monitors and protects against premature and partial base-pairing of codons in the 5'-UTR with the anticodon of initiator tRNA. Together with eIF1A (EIF1AX), acts for ribosomal scanning, promotion of the assembly of 48S complex at the initiation codon (43S PIC becomes 48S PIC after the start codon is reached), and dissociation of aberrant complexes. Interacts with EIF4G1, which in a mutual exclusive interaction associates either with EIF1 or with EIF4E on a common binding site. EIF4G1-EIF1 complex promotes ribosome scanning (on both short and long 5'UTR), leaky scanning (on short 5'UTR) which is the bypass of the initial start codon, and discrimination against cap-proximal AUG. Is probably maintained within the 43S PIC in open conformation thanks to eIF1A-EIF5 interaction. Once the correct start codon is reached, EIF1 is physically excluded from the decoding site, shifting the PIC into the closed conformation and arresting it at the start codon. The polypeptide is Eukaryotic translation initiation factor 1 (Eif1) (Mus musculus (Mouse)).